The primary structure comprises 963 residues: Protein NLP2 (963 aa).

The region spanning 635–716 (RRPGEKRRTK…IDSVQGVQGS (82 aa)) is the RWP-RK domain. Polar residues predominate over residues 734–755 (MSGTGTSFKNPNAQTENGVSAQ). The disordered stretch occupies residues 734 to 794 (MSGTGTSFKN…QSTNTGTTSN (61 aa)). Over residues 756 to 794 (GTAAAPKSPPSSSCSHSSGSSTCCSTGANQSTNTGTTSN) the composition is skewed to low complexity. Residues 862-945 (ASKVKATFGE…RTIKISVHEA (84 aa)) enclose the PB1 domain.

It localises to the nucleus. Probable transcription factor. The protein is Protein NLP2 (NLP2) of Arabidopsis thaliana (Mouse-ear cress).